The following is a 70-amino-acid chain: Small, acid-soluble spore protein I (70 aa).

Belongs to the SspI family.

Its subcellular location is the spore core. In Bacillus licheniformis (strain ATCC 14580 / DSM 13 / JCM 2505 / CCUG 7422 / NBRC 12200 / NCIMB 9375 / NCTC 10341 / NRRL NRS-1264 / Gibson 46), this protein is Small, acid-soluble spore protein I.